Consider the following 313-residue polypeptide: D-apiose import binding protein (313 aa).

A signal peptide spans 1 to 26 (MKLTRRLTLAAFASVLALGTAAPAFS). D-apiofuranose-binding positions include N39, 115-116 (DR), 162-164 (DTN), R168, N218, D243, and Q263.

This sequence belongs to the bacterial solute-binding protein 2 family.

It localises to the periplasm. Part of an ABC transporter complex involved in D-apiose import. The chain is D-apiose import binding protein from Rhizobium rhizogenes (strain K84 / ATCC BAA-868) (Agrobacterium radiobacter).